The following is a 319-amino-acid chain: Phenoxybenzoate dioxygenase subunit beta (319 aa).

The region spanning 7–109 is the FAD-binding FR-type domain; the sequence is MAPVSLRIHA…DGPSNHFALD (103 aa). 113 to 223 lines the NAD(+) pocket; it reads PHAVFIAGGI…PARVHLEYFA (111 aa). In terms of domain architecture, 2Fe-2S ferredoxin-type spans 234–319; the sequence is FVVHLARSGR…SKTAELTLDL (86 aa). 4 residues coordinate [2Fe-2S] cluster: Cys-268, Cys-273, Cys-276, and Cys-306.

The protein belongs to the PDR/VanB family. This dioxygenase system consists of two proteins: the alpha subunit (PobA) and a subunit (PobB) that acts as a ferredoxin and a ferredoxin reductase. It depends on FMN as a cofactor.

The protein operates within aromatic compound metabolism; carboxydiphenyl ether degradation. In terms of biological role, degrades exclusively diarylether compounds having carboxyl groups in the 3- or 4-position. Yields a hemiacetal that spontaneously hydrolyzes to phenol and protocatechuate. This Ectopseudomonas oleovorans (Pseudomonas oleovorans) protein is Phenoxybenzoate dioxygenase subunit beta (pobB).